A 168-amino-acid chain; its full sequence is Endoribonuclease YbeY (168 aa).

Zn(2+) is bound by residues His-119, His-123, and His-129.

This sequence belongs to the endoribonuclease YbeY family. It depends on Zn(2+) as a cofactor.

The protein localises to the cytoplasm. In terms of biological role, single strand-specific metallo-endoribonuclease involved in late-stage 70S ribosome quality control and in maturation of the 3' terminus of the 16S rRNA. The protein is Endoribonuclease YbeY of Gluconobacter oxydans (strain 621H) (Gluconobacter suboxydans).